The chain runs to 87 residues: Small ribosomal subunit protein bS18 (87 aa).

Residues 1–10 are compositionally biased toward basic and acidic residues; the sequence is MAGKSSGDRR. Residues 1-23 form a disordered region; it reads MAGKSSGDRRKLLRGAKVGKNAA.

Belongs to the bacterial ribosomal protein bS18 family. In terms of assembly, part of the 30S ribosomal subunit. Forms a tight heterodimer with protein bS6.

Functionally, binds as a heterodimer with protein bS6 to the central domain of the 16S rRNA, where it helps stabilize the platform of the 30S subunit. This chain is Small ribosomal subunit protein bS18, found in Clavibacter sepedonicus (Clavibacter michiganensis subsp. sepedonicus).